The sequence spans 404 residues: Probable mannosyltransferase KTR3 (404 aa).

The Cytoplasmic portion of the chain corresponds to 1–27 (MSVHHKKKLMPKSALLIRKYQKGIRSS). Residues 28-44 (FIGLIIVLSFLFFMSGS) form a helical; Signal-anchor for type II membrane protein membrane-spanning segment. The segment at 45-83 (RSPEVPIAQGTSVSRVASKDYLMPFTDKSQGVIHPVDDG) is stem region. Residues 45 to 404 (RSPEVPIAQG…AGNYKLPPGI (360 aa)) are Lumenal-facing. Residues 84 to 404 (KKEKGVMVTL…AGNYKLPPGI (321 aa)) form a catalytic region. Catalysis depends on Glu295, which acts as the Nucleophile.

It belongs to the glycosyltransferase 15 family. As to quaternary structure, interacts with SVP26.

The protein resides in the membrane. Possible glycosyltransferase that transfers an alpha-D-mannosyl residue from GDP-mannose into lipid-linked oligosaccharide, forming an alpha-(1-&gt;2)-D-mannosyl-D-mannose linkage. The protein is Probable mannosyltransferase KTR3 (KTR3) of Saccharomyces cerevisiae (strain ATCC 204508 / S288c) (Baker's yeast).